A 683-amino-acid chain; its full sequence is uncharacterized protein (683 aa).

The next 14 helical transmembrane spans lie at 12–32, 41–61, 84–104, 110–130, 162–182, 194–214, 221–241, 377–397, 413–433, 495–515, 548–568, 573–593, 603–623, and 645–665; these read LLLY…MMGL, LWLG…IGLI, MAIA…GILF, GLAY…LLAP, IAVL…IQGV, FAVG…LGGM, QVAQ…MIAW, LNFV…PHIL, VAWA…LAAL, IAGL…AAAL, VTTA…VTSL, ILFL…PVLV, AAGA…YIIV, and IASG…VSLL.

The protein belongs to the sodium:solute symporter (SSF) (TC 2.A.21) family.

The protein localises to the cell membrane. This is an uncharacterized protein from Cupriavidus necator (strain ATCC 17699 / DSM 428 / KCTC 22496 / NCIMB 10442 / H16 / Stanier 337) (Ralstonia eutropha).